A 388-amino-acid polypeptide reads, in one-letter code: Mannitol-1-phosphate 5-dehydrogenase (388 aa).

Position 4–15 (4–15 (AVHFGAGNIGRG)) interacts with NAD(+).

The protein belongs to the mannitol dehydrogenase family.

The catalysed reaction is D-mannitol 1-phosphate + NAD(+) = beta-D-fructose 6-phosphate + NADH + H(+). The chain is Mannitol-1-phosphate 5-dehydrogenase from Lactococcus lactis subsp. cremoris (strain SK11).